Consider the following 61-residue polypeptide: MKIAKVGNVIEFKNGLTGVVEKVNENSVIVDVTIMDNYRDLELDSLTVVNHKNYKIIRDSY.

This is an uncharacterized protein from Bacillus subtilis (strain 168).